Consider the following 305-residue polypeptide: Regulator of microtubule dynamics protein 1 (305 aa).

N6-succinyllysine is present on Lys160. TPR repeat units follow at residues 163 to 199 and 217 to 253; these read AICI…NPKD and PWYQ…DPNF. Position 245 is an N6-succinyllysine (Lys245).

Belongs to the RMDN family. In terms of assembly, interacts with microtubules.

The protein localises to the cytoplasm. It localises to the cytoskeleton. The protein resides in the spindle. It is found in the spindle pole. This Mus musculus (Mouse) protein is Regulator of microtubule dynamics protein 1 (Rmdn1).